Consider the following 341-residue polypeptide: S-adenosylmethionine:tRNA ribosyltransferase-isomerase (341 aa).

Belongs to the QueA family. Monomer.

The protein localises to the cytoplasm. The enzyme catalyses 7-aminomethyl-7-carbaguanosine(34) in tRNA + S-adenosyl-L-methionine = epoxyqueuosine(34) in tRNA + adenine + L-methionine + 2 H(+). Its pathway is tRNA modification; tRNA-queuosine biosynthesis. Its function is as follows. Transfers and isomerizes the ribose moiety from AdoMet to the 7-aminomethyl group of 7-deazaguanine (preQ1-tRNA) to give epoxyqueuosine (oQ-tRNA). This chain is S-adenosylmethionine:tRNA ribosyltransferase-isomerase, found in Clostridium botulinum (strain Loch Maree / Type A3).